The chain runs to 135 residues: Congerin-1 (135 aa).

Residue Ser-1 is modified to N-acetylserine. The Galectin domain occupies 3–135 (GLQVKNFDFT…GDARLTLVKE (133 aa)). 70-76 (WETEQRS) contributes to the a beta-D-galactoside binding site.

In terms of assembly, homodimer.

Its function is as follows. This protein binds beta-galactoside. Its physiological function is not yet known. The polypeptide is Congerin-1 (Conger myriaster (Conger eel)).